The following is a 134-amino-acid chain: Profilin-3 (134 aa).

C13 and C118 are disulfide-bonded. The short motif at 84 to 100 is the Involved in PIP2 interaction element; sequence AVIRGKKGSGGITIKKT. T114 bears the Phosphothreonine mark.

It belongs to the profilin family. As to quaternary structure, occurs in many kinds of cells as a complex with monomeric actin in a 1:1 ratio. In terms of processing, phosphorylated by MAP kinases.

The protein localises to the cytoplasm. The protein resides in the cytoskeleton. In terms of biological role, binds to actin and affects the structure of the cytoskeleton. At high concentrations, profilin prevents the polymerization of actin, whereas it enhances it at low concentrations. The polypeptide is Profilin-3 (Olea europaea (Common olive)).